The sequence spans 264 residues: ATP synthase subunit a (264 aa).

Transmembrane regions (helical) follow at residues 29–49, 90–110, 134–154, 177–197, 208–228, and 235–255; these read TWHIDSLFFSVGLGVLFLWLF, IAPLALTIFVWVFMMNFMDMI, DLNITFSLALGVFVLIIYYSI, IPVNLLLESVTLIAKPISLAL, LIFILIALMYGANLALSALGV, and LIFHILVITLQAFIFMMLTIV.

Belongs to the ATPase A chain family. F-type ATPases have 2 components, CF(1) - the catalytic core - and CF(0) - the membrane proton channel. CF(1) has five subunits: alpha(3), beta(3), gamma(1), delta(1), epsilon(1). CF(0) has three main subunits: a(1), b(2) and c(9-12). The alpha and beta chains form an alternating ring which encloses part of the gamma chain. CF(1) is attached to CF(0) by a central stalk formed by the gamma and epsilon chains, while a peripheral stalk is formed by the delta and b chains.

It is found in the cell inner membrane. Functionally, key component of the proton channel; it plays a direct role in the translocation of protons across the membrane. The polypeptide is ATP synthase subunit a (Shewanella loihica (strain ATCC BAA-1088 / PV-4)).